The primary structure comprises 586 residues: MASDLSKKRKFKDSKGSKPERALASSSKAKKLKRAPTPEDSDAERDNSSDPEIENQEPEVEVPGPPQDNSEDQEAEENANAFERQDEPAGLDSAIQKGDGSLLGPSVSTDAQAFSELNLSDKTMMSINEMGFTKMTEIQRRGIPPLLAGKDVLGAAKTGSGKTLAFLIPAIEMLNSLRFKPRNGTGVIVVTPTRELALQIFGVARELMKNHSQTYGVVIGGANIRAEEDKLGKGVNLLIATPGRLLDHLRRGSFVFKNLKSLIIDEADRILEVGFEDEMRHIVKILPKENRQTMLFSATQTTKVEDLARISLRPGPLYINVDEEKQFSTVEGLDQGYVIVDADKRFLLLFSFLKKMAKKKIIVFLSSCNSVKYYSELLQYIDLQVLDLHGKQKQQKRTNTFFEFCNAKQGTLICTDVAARGLDIPQVDWIVQFDPPDDPRDYIHRVGRTARGNNTKGRSLLFLQPCELGFLAHLKAAKVPVVEYDFPKNKILNVQSQLEKLIGSNYYLNQSAKDGYRSYLHAYASHSLRSVFDVQKLDMVKVAKGFGFSTPPRVDITLGAGMSRDKKPQARRAYGSQPRQSGHQRR.

The interval 1-107 (MASDLSKKRK…GDGSLLGPSV (107 aa)) is disordered. Residues 39 to 60 (EDSDAERDNSSDPEIENQEPEV) show a composition bias toward acidic residues. Positions 112–140 (QAFSELNLSDKTMMSINEMGFTKMTEIQR) match the Q motif motif. The Helicase ATP-binding domain maps to 143-318 (IPPLLAGKDV…RISLRPGPLY (176 aa)). ATP is bound at residue 156-163 (AKTGSGKT). The short motif at 265–268 (DEAD) is the DEAD box element. The 171-residue stretch at 332 to 502 (GLDQGYVIVD…NVQSQLEKLI (171 aa)) folds into the Helicase C-terminal domain. Residues 557–586 (TLGAGMSRDKKPQARRAYGSQPRQSGHQRR) form a disordered region. Polar residues predominate over residues 577–586 (QPRQSGHQRR).

It belongs to the DEAD box helicase family. DDX18/HAS1 subfamily. Associates in the nucleolus with the 60S and pre-60S ribosomal subunits.

The protein localises to the nucleus. It is found in the nucleolus. It catalyses the reaction ATP + H2O = ADP + phosphate + H(+). In terms of biological role, ATP-dependent RNA helicase involved in 40S ribosomal subunit biogenesis. Required for the processing and cleavage of 35S pre-rRNA at sites A0, A1, and A2, leading to mature 18S rRNA. The polypeptide is ATP-dependent RNA helicase HAS1 (HAS1) (Chaetomium globosum (strain ATCC 6205 / CBS 148.51 / DSM 1962 / NBRC 6347 / NRRL 1970) (Soil fungus)).